Reading from the N-terminus, the 178-residue chain is ATP synthase subunit delta (178 aa).

The protein belongs to the ATPase delta chain family. In terms of assembly, F-type ATPases have 2 components, F(1) - the catalytic core - and F(0) - the membrane proton channel. F(1) has five subunits: alpha(3), beta(3), gamma(1), delta(1), epsilon(1). F(0) has three main subunits: a(1), b(2) and c(10-14). The alpha and beta chains form an alternating ring which encloses part of the gamma chain. F(1) is attached to F(0) by a central stalk formed by the gamma and epsilon chains, while a peripheral stalk is formed by the delta and b chains.

It localises to the cell inner membrane. Its function is as follows. F(1)F(0) ATP synthase produces ATP from ADP in the presence of a proton or sodium gradient. F-type ATPases consist of two structural domains, F(1) containing the extramembraneous catalytic core and F(0) containing the membrane proton channel, linked together by a central stalk and a peripheral stalk. During catalysis, ATP synthesis in the catalytic domain of F(1) is coupled via a rotary mechanism of the central stalk subunits to proton translocation. This protein is part of the stalk that links CF(0) to CF(1). It either transmits conformational changes from CF(0) to CF(1) or is implicated in proton conduction. The chain is ATP synthase subunit delta from Pseudomonas fluorescens (strain Pf0-1).